A 113-amino-acid polypeptide reads, in one-letter code: Large ribosomal subunit protein uL22 (113 aa).

The protein belongs to the universal ribosomal protein uL22 family. In terms of assembly, part of the 50S ribosomal subunit.

In terms of biological role, this protein binds specifically to 23S rRNA; its binding is stimulated by other ribosomal proteins, e.g. L4, L17, and L20. It is important during the early stages of 50S assembly. It makes multiple contacts with different domains of the 23S rRNA in the assembled 50S subunit and ribosome. Functionally, the globular domain of the protein is located near the polypeptide exit tunnel on the outside of the subunit, while an extended beta-hairpin is found that lines the wall of the exit tunnel in the center of the 70S ribosome. The polypeptide is Large ribosomal subunit protein uL22 (Neorickettsia sennetsu (strain ATCC VR-367 / Miyayama) (Ehrlichia sennetsu)).